The following is a 429-amino-acid chain: L-cysteine:1D-myo-inositol 2-amino-2-deoxy-alpha-D-glucopyranoside ligase (429 aa).

Position 60 (Cys60) interacts with Zn(2+). Residues 60-63 (CGIT), Thr75, and 98-100 (NIT) each bind L-cysteinyl-5'-AMP. Residues 62–72 (ITPYDATHLGH) carry the 'HIGH' region motif. A 'ERGGDP' region motif is present at residues 204–209 (ERGGDP). Trp244 provides a ligand contact to L-cysteinyl-5'-AMP. Cys248 lines the Zn(2+) pocket. Position 266 to 268 (266 to 268 (GSD)) interacts with L-cysteinyl-5'-AMP. His273 is a Zn(2+) binding site. L-cysteinyl-5'-AMP is bound at residue Ile300. Residues 306-310 (KMSKS) carry the 'KMSKS' region motif.

Belongs to the class-I aminoacyl-tRNA synthetase family. MshC subfamily. As to quaternary structure, monomer. It depends on Zn(2+) as a cofactor.

The enzyme catalyses 1D-myo-inositol 2-amino-2-deoxy-alpha-D-glucopyranoside + L-cysteine + ATP = 1D-myo-inositol 2-(L-cysteinylamino)-2-deoxy-alpha-D-glucopyranoside + AMP + diphosphate + H(+). In terms of biological role, catalyzes the ATP-dependent condensation of GlcN-Ins and L-cysteine to form L-Cys-GlcN-Ins. The polypeptide is L-cysteine:1D-myo-inositol 2-amino-2-deoxy-alpha-D-glucopyranoside ligase (Mycolicibacterium vanbaalenii (strain DSM 7251 / JCM 13017 / BCRC 16820 / KCTC 9966 / NRRL B-24157 / PYR-1) (Mycobacterium vanbaalenii)).